Reading from the N-terminus, the 304-residue chain is Small ribosomal subunit biogenesis GTPase RsgA (304 aa).

The 160-residue stretch at 78-237 (HSFLTRPPVA…VADTPGFNRP (160 aa)) folds into the CP-type G domain. Residues 127-130 (TKTD) and 179-187 (GPSGVGKSS) contribute to the GTP site. 4 residues coordinate Zn(2+): cysteine 262, cysteine 267, histidine 269, and cysteine 275.

It belongs to the TRAFAC class YlqF/YawG GTPase family. RsgA subfamily. As to quaternary structure, monomer. Associates with 30S ribosomal subunit, binds 16S rRNA. Requires Zn(2+) as cofactor.

It localises to the cytoplasm. One of several proteins that assist in the late maturation steps of the functional core of the 30S ribosomal subunit. Helps release RbfA from mature subunits. May play a role in the assembly of ribosomal proteins into the subunit. Circularly permuted GTPase that catalyzes slow GTP hydrolysis, GTPase activity is stimulated by the 30S ribosomal subunit. The protein is Small ribosomal subunit biogenesis GTPase RsgA of Synechococcus sp. (strain CC9605).